The following is a 443-amino-acid chain: MNQNKPTSKLISDFWKGKTSEELFERAKKVSPGGVHSPVRSFRSVGGTPVFFASAKGATLTDISGKEYIDYCLSFGPLILGHRDPEVEEVVRETTEIAWSFGAAEPYSLELAELISSRVPWAEKVRFVNSGTEAVMSALRVARAATGREKILKFDGCYHGHLDSLLVKAGSGLAGESSSDSAGISATSIANTLVLPLDDEASVERVFETEGKNIAALIIEPLPANYGLLIQRKEFLLKIVETARKYGTLVVFDEVISGFRVGFQGMSGLLGIWPDLVTYGKIIGGGFPVGCYAGKKDLLDLVAPSGPVYQAGTLSANPFGMRAGLATLKKVQRDSIYSVLDDRTKIFTDTMTKLLNKKSNQEWEAVIHSSLFWFRKKTQQPIRRIDLIPEGHKESFAKVFHTFLKNGIYLAPSGYEVGFLSWAHDDEIIAKTLEIADKALKTF.

An N6-(pyridoxal phosphate)lysine modification is found at lysine 281.

Belongs to the class-III pyridoxal-phosphate-dependent aminotransferase family. HemL subfamily. In terms of assembly, homodimer. Pyridoxal 5'-phosphate is required as a cofactor.

The protein localises to the cytoplasm. The enzyme catalyses (S)-4-amino-5-oxopentanoate = 5-aminolevulinate. It participates in porphyrin-containing compound metabolism; protoporphyrin-IX biosynthesis; 5-aminolevulinate from L-glutamyl-tRNA(Glu): step 2/2. The polypeptide is Glutamate-1-semialdehyde 2,1-aminomutase (Leptospira interrogans serogroup Icterohaemorrhagiae serovar Lai (strain 56601)).